A 226-amino-acid polypeptide reads, in one-letter code: Translation initiation factor IF-3 (226 aa).

Residues 195 to 226 (FVPLAPLSPEDLIEEPELESESDSDAEPESDN) form a disordered region. Residues 205-226 (DLIEEPELESESDSDAEPESDN) show a composition bias toward acidic residues.

This sequence belongs to the IF-3 family. In terms of assembly, monomer.

It is found in the cytoplasm. Its function is as follows. IF-3 binds to the 30S ribosomal subunit and shifts the equilibrium between 70S ribosomes and their 50S and 30S subunits in favor of the free subunits, thus enhancing the availability of 30S subunits on which protein synthesis initiation begins. This chain is Translation initiation factor IF-3, found in Chlorobium chlorochromatii (strain CaD3).